The primary structure comprises 396 residues: Tryptophan synthase beta chain (396 aa).

At Lys-90 the chain carries N6-(pyridoxal phosphate)lysine.

Belongs to the TrpB family. In terms of assembly, tetramer of two alpha and two beta chains. The cofactor is pyridoxal 5'-phosphate.

It catalyses the reaction (1S,2R)-1-C-(indol-3-yl)glycerol 3-phosphate + L-serine = D-glyceraldehyde 3-phosphate + L-tryptophan + H2O. It functions in the pathway amino-acid biosynthesis; L-tryptophan biosynthesis; L-tryptophan from chorismate: step 5/5. Functionally, the beta subunit is responsible for the synthesis of L-tryptophan from indole and L-serine. The polypeptide is Tryptophan synthase beta chain (Clostridium kluyveri (strain NBRC 12016)).